The chain runs to 398 residues: Odorant receptor 24a (398 aa).

The Cytoplasmic segment spans residues Met-1–Arg-14. Residues His-15–Pro-31 form a helical membrane-spanning segment. Residues Glu-32 to Asn-46 are Extracellular-facing. The helical transmembrane segment at Phe-47–Ile-67 threads the bilayer. Residues Asn-68–Asp-74 are Cytoplasmic-facing. The helical transmembrane segment at Ala-75–Tyr-95 threads the bilayer. Over Gln-96–Arg-124 the chain is Extracellular. A helical membrane pass occupies residues Phe-125 to Thr-145. Topologically, residues Ser-146 to Thr-199 are cytoplasmic. The helical transmembrane segment at Val-200–Leu-220 threads the bilayer. Over Leu-221–Arg-269 the chain is Extracellular. A helical transmembrane segment spans residues Leu-270–Gly-290. Topologically, residues Thr-291–Asp-295 are cytoplasmic. A helical membrane pass occupies residues Ile-296 to Val-316. At Glu-317–Ile-398 the chain is on the extracellular side.

Belongs to the insect chemoreceptor superfamily. Heteromeric odorant receptor channel (TC 1.A.69) family. Or1a subfamily. In terms of assembly, interacts with Orco. Complexes exist early in the endomembrane system in olfactory sensory neurons (OSNs), coupling these complexes to the conserved ciliary trafficking pathway. As to expression, not expressed in either the antenna or maxillary palp.

The protein localises to the cell membrane. Functionally, odorant receptor which mediates acceptance or avoidance behavior, depending on its substrates. The odorant receptor repertoire encodes a large collection of odor stimuli that vary widely in identity, intensity, and duration. May form a complex with Orco to form odorant-sensing units, providing sensitive and prolonged odorant signaling and calcium permeability. Involved in the behavioral responses to pentanol, hexanol, octanol, nonanol, propyl acetate, butyl acetate, isoamyl acetate, methyl caproate, anisole, heptanal, 2-heptanone, r-carvone, and nonanoic acid. Also responds to pyrazines. The sequence is that of Odorant receptor 24a (Or24a) from Drosophila melanogaster (Fruit fly).